Consider the following 477-residue polypeptide: Chaperonin GroEL 2 (477 aa).

Residues 29–32 (TLGP), 86–90 (DGTTT), and G416 each bind ATP.

The protein belongs to the chaperonin (HSP60) family. In terms of assembly, forms a cylinder of 14 subunits composed of two heptameric rings stacked back-to-back. Interacts with the co-chaperonin GroES.

The protein localises to the cytoplasm. The catalysed reaction is ATP + H2O + a folded polypeptide = ADP + phosphate + an unfolded polypeptide.. In terms of biological role, together with its co-chaperonin GroES, plays an essential role in assisting protein folding. The GroEL-GroES system forms a nano-cage that allows encapsulation of the non-native substrate proteins and provides a physical environment optimized to promote and accelerate protein folding. In Streptomyces lividans, this protein is Chaperonin GroEL 2.